The primary structure comprises 122 residues: Large ribosomal subunit protein uL14c (122 aa).

This sequence belongs to the universal ribosomal protein uL14 family. Part of the 50S ribosomal subunit.

Its subcellular location is the plastid. The protein localises to the chloroplast. In terms of biological role, binds to 23S rRNA. The protein is Large ribosomal subunit protein uL14c of Lepidium virginicum (Virginia pepperweed).